We begin with the raw amino-acid sequence, 737 residues long: DNA topoisomerase 4 subunit A (737 aa).

In terms of domain architecture, Topo IIA-type catalytic spans 32–496 (LPDVRDGLKP…SFEEVTLTNQ (465 aa)). Catalysis depends on Tyr-120, which acts as the O-(5'-phospho-DNA)-tyrosine intermediate.

The protein belongs to the type II topoisomerase GyrA/ParC subunit family. ParC type 1 subfamily. Heterotetramer composed of ParC and ParE.

The protein localises to the cell membrane. The enzyme catalyses ATP-dependent breakage, passage and rejoining of double-stranded DNA.. Its function is as follows. Topoisomerase IV is essential for chromosome segregation. It relaxes supercoiled DNA. Performs the decatenation events required during the replication of a circular DNA molecule. The polypeptide is DNA topoisomerase 4 subunit A (Rickettsia felis (strain ATCC VR-1525 / URRWXCal2) (Rickettsia azadi)).